A 228-amino-acid polypeptide reads, in one-letter code: MQKLKQQVFEANMELPRYGLVTFTWGNVSAIDRERGLVVIKPSGVAYETMKADDMVVVDMSGNVVEGEYRPSSDTATHLELYRRYPSLGGIVHTHSTHATAWAQAGLAIPALGTTHADYFFGDIPCTRGLSKEEVQGEYELNTGKVIIETLGDAEPLHTPGIVVYQHGPFAWGKDAHDAVHNAVVMEEVAKMAWIARSINPQLNHIDSFLMNKHFMRKHGPNAYYGQK.

Residues 26-27 (GN), 43-44 (SG), and 72-73 (SS) each bind substrate. The Zn(2+) site is built by Asp74, His93, and His95. Asp118 acts as the Proton donor/acceptor in catalysis. His167 contacts Zn(2+). Tyr225 serves as the catalytic Proton donor/acceptor.

Belongs to the aldolase class II family. AraD/FucA subfamily. The cofactor is Zn(2+).

It catalyses the reaction L-ribulose 5-phosphate = D-xylulose 5-phosphate. The protein operates within cofactor degradation; L-ascorbate degradation; D-xylulose 5-phosphate from L-ascorbate: step 4/4. In terms of biological role, catalyzes the isomerization of L-ribulose 5-phosphate to D-xylulose 5-phosphate. Is involved in the anaerobic L-ascorbate utilization. This chain is L-ribulose-5-phosphate 4-epimerase UlaF, found in Escherichia coli O45:K1 (strain S88 / ExPEC).